Reading from the N-terminus, the 121-residue chain is Snaclec coagulation factor IX-binding protein subunit A (121 aa).

Residues 1–120 form the C-type lectin domain; the sequence is YEGHCYQTFK…CGERNPFVCE (120 aa). Disulfide bonds link Cys-22–Cys-119 and Cys-94–Cys-111. 3 residues coordinate Ca(2+): Ser-33, Glu-35, and Glu-39. Glu-120 lines the Ca(2+) pocket.

The protein belongs to the snaclec family. In terms of assembly, heterodimer of subunits A and B; disulfide-linked. Expressed by the venom gland.

It localises to the secreted. Its function is as follows. Anticoagulant protein which binds to the gamma-carboxyglutamic acid-domain regions of factor IX (F9) (but not factor X) in the presence of calcium with a 1 to 1 stoichiometry. The chain is Snaclec coagulation factor IX-binding protein subunit A from Gloydius halys (Chinese water mocassin).